The sequence spans 500 residues: NAD(P)H-quinone oxidoreductase chain 4, chloroplastic (500 aa).

The next 14 helical transmembrane spans lie at 4–24 (FPWL…IFFL), 37–57 (ISIC…HFQL), 87–107 (VGSI…AWPV), 113–130 (LFYF…GLFS), 134–154 (LLLF…LLSM), 167–187 (FILY…GMGL), 211–231 (ILLY…IPLH), 242–262 (HYST…YGLI), 272–292 (AHYL…IYAA), 313–333 (MGFI…GAIL), 334–354 (QILS…TASD), 386–406 (LALP…GLIT), 417–437 (LITF…LSML), and 462–482 (LFIL…PDLV).

This sequence belongs to the complex I subunit 4 family.

Its subcellular location is the plastid. It localises to the chloroplast thylakoid membrane. It carries out the reaction a plastoquinone + NADH + (n+1) H(+)(in) = a plastoquinol + NAD(+) + n H(+)(out). It catalyses the reaction a plastoquinone + NADPH + (n+1) H(+)(in) = a plastoquinol + NADP(+) + n H(+)(out). This chain is NAD(P)H-quinone oxidoreductase chain 4, chloroplastic, found in Agrostis stolonifera (Creeping bentgrass).